The sequence spans 118 residues: Beta-2-microglobulin (118 aa).

An N-terminal signal peptide occupies residues 1 to 20; that stretch reads MARFVALVLLGLLSLSGLDA. The Ig-like C1-type domain maps to 25–112; the sequence is PKIQVYSRHP…HVTLEQPRIV (88 aa). Cysteine 45 and cysteine 99 are disulfide-bonded.

It belongs to the beta-2-microglobulin family. As to quaternary structure, heterodimer of an alpha chain and a beta chain. Beta-2-microglobulin is the beta-chain of major histocompatibility complex class I molecules. Forms a heterotrimer with MR1 and a metabolite antigen.

It localises to the secreted. In terms of biological role, component of the class I major histocompatibility complex (MHC). Involved in the presentation of peptide antigens to the immune system. The polypeptide is Beta-2-microglobulin (B2M) (Bos taurus (Bovine)).